The chain runs to 443 residues: Methylenetetrahydrofolate--tRNA-(uracil-5-)-methyltransferase TrmFO (443 aa).

FAD is bound at residue 8–13; the sequence is GAGLAG.

The protein belongs to the MnmG family. TrmFO subfamily. It depends on FAD as a cofactor.

Its subcellular location is the cytoplasm. The catalysed reaction is uridine(54) in tRNA + (6R)-5,10-methylene-5,6,7,8-tetrahydrofolate + NADH + H(+) = 5-methyluridine(54) in tRNA + (6S)-5,6,7,8-tetrahydrofolate + NAD(+). The enzyme catalyses uridine(54) in tRNA + (6R)-5,10-methylene-5,6,7,8-tetrahydrofolate + NADPH + H(+) = 5-methyluridine(54) in tRNA + (6S)-5,6,7,8-tetrahydrofolate + NADP(+). Catalyzes the folate-dependent formation of 5-methyl-uridine at position 54 (M-5-U54) in all tRNAs. This chain is Methylenetetrahydrofolate--tRNA-(uracil-5-)-methyltransferase TrmFO, found in Thermus thermophilus (strain ATCC BAA-163 / DSM 7039 / HB27).